The sequence spans 63 residues: Large ribosomal subunit protein eL37 (63 aa).

Residues cysteine 20, cysteine 23, cysteine 35, and cysteine 38 each coordinate Zn(2+). The segment at 20-38 (CRRCGHHSFNVRKGYCAHC) adopts a C4-type zinc-finger fold.

The protein belongs to the eukaryotic ribosomal protein eL37 family. Zn(2+) is required as a cofactor.

In terms of biological role, binds to the 23S rRNA. The polypeptide is Large ribosomal subunit protein eL37 (Thermofilum pendens (strain DSM 2475 / Hrk 5)).